Reading from the N-terminus, the 903-residue chain is HTH-type transcriptional regulator MalT (903 aa).

Residue Cys39–Thr46 participates in ATP binding. Residues Glu832 to Leu897 form the HTH luxR-type domain. The H-T-H motif DNA-binding region spans Asn856–Arg875.

It belongs to the MalT family. In terms of assembly, monomer in solution. Oligomerizes to an active state in the presence of the positive effectors ATP and maltotriose.

Its activity is regulated as follows. Activated by ATP and maltotriose, which are both required for DNA binding. Its function is as follows. Positively regulates the transcription of the maltose regulon whose gene products are responsible for uptake and catabolism of malto-oligosaccharides. Specifically binds to the promoter region of its target genes, recognizing a short DNA motif called the MalT box. The chain is HTH-type transcriptional regulator MalT from Yersinia enterocolitica serotype O:8 / biotype 1B (strain NCTC 13174 / 8081).